We begin with the raw amino-acid sequence, 266 residues long: Undecaprenyl-diphosphatase (266 aa).

7 consecutive transmembrane segments (helical) span residues 41–61 (NLAF…VILW), 82–102 (YVIN…FFKD), 106–126 (AIFG…AALL), 140–160 (ISMK…LPGL), 180–200 (LAQF…LLDG), 213–233 (IPTL…CLAC), and 245–265 (LIYF…VSQL).

This sequence belongs to the UppP family.

It localises to the cell inner membrane. The enzyme catalyses di-trans,octa-cis-undecaprenyl diphosphate + H2O = di-trans,octa-cis-undecaprenyl phosphate + phosphate + H(+). Functionally, catalyzes the dephosphorylation of undecaprenyl diphosphate (UPP). Confers resistance to bacitracin. This Bacteroides fragilis (strain YCH46) protein is Undecaprenyl-diphosphatase.